The chain runs to 312 residues: DNA-directed RNA polymerase subunit alpha (312 aa).

Residues 1–226 (MIEFEKPIIT…EHLNLFTDLT (226 aa)) form an alpha N-terminal domain (alpha-NTD) region. The alpha C-terminal domain (alpha-CTD) stretch occupies residues 243–312 (DEKVLDRTIE…DLGLGLKNDK (70 aa)).

This sequence belongs to the RNA polymerase alpha chain family. As to quaternary structure, homodimer. The RNAP catalytic core consists of 2 alpha, 1 beta, 1 beta' and 1 omega subunit. When a sigma factor is associated with the core the holoenzyme is formed, which can initiate transcription.

It catalyses the reaction RNA(n) + a ribonucleoside 5'-triphosphate = RNA(n+1) + diphosphate. Functionally, DNA-dependent RNA polymerase catalyzes the transcription of DNA into RNA using the four ribonucleoside triphosphates as substrates. The polypeptide is DNA-directed RNA polymerase subunit alpha (Streptococcus mutans serotype c (strain ATCC 700610 / UA159)).